The primary structure comprises 289 residues: Oxaloacetate decarboxylase (289 aa).

Ser50 contributes to the substrate binding site. Asp88 is a binding site for Mg(2+). Substrate contacts are provided by Arg159 and His235.

It belongs to the isocitrate lyase family. Oxaloacetate decarboxylase subfamily. Homotetramer; dimer of dimers. Requires Mg(2+) as cofactor.

The catalysed reaction is oxaloacetate + H(+) = pyruvate + CO2. Catalyzes the decarboxylation of oxaloacetate into pyruvate. Seems to play a role in maintaining cellular concentrations of bicarbonate and pyruvate. This chain is Oxaloacetate decarboxylase, found in Pseudomonas fluorescens (strain SBW25).